Here is a 726-residue protein sequence, read N- to C-terminus: MSTSDDIHNTTATGKCPFHQGGHDQSAGGGTTTRDWWPNQLRVDLLNQHSNRSNPLGEDFDYRKEFSKLDYYGLKKDLKALLTESQPWWPADWGSYAGLFIRMAWHGAGTYRSIDGRGGAGRGQQRFAPLNSWPDNVSLDKARRLLWPIKQKYGQKISWADLFILAGNVALENSGFRTFGFGAGREDVWEPDLDVNWGDEKAWLTHRHPEALAKAPLGATEMGLIYVNPEGPDHSGEPLSAAAAIRATFGNMGMNDEETVALIAGGHTLGKTHGAGPTSNVGPDPEAAPIEEQGLGWASTYGSGVGADAITSGLEVVWTQTPTQWSNYFFENLFKYEWVQTRSPAGAIQFEAVDAPEIIPDPFDPSKKRKPTMLVTDLTLRFDPEFEKISRRFLNDPQAFNEAFARAWFKLTHRDMGPKSRYIGPEVPKEDLIWQDPLPQPIYNPTEQDIIDLKFAIADSGLSVSELVSVAWASASTFRGGDKRGGANGARLALMPQRDWDVNAAAVRALPVLEKIQKESGKASLADIIVLAGVVGVEKAASAAGLSIHVPFAPGRVDARQDQTDIEMFELLEPIADGFRNYRARLDVSTTESLLIDKAQQLTLTAPEMTALVGGMRVLGANFDGSKNGVFTDRVGVLSNDFFVNLLDMRYEWKATDESKELFEGRDRETGEVKYTASRADLVFGSNSVLRAVAEVYASSDAHEKFVKDFVAAWVKVMNLDRFDLL.

The tract at residues 1–33 is disordered; the sequence is MSTSDDIHNTTATGKCPFHQGGHDQSAGGGTTT. A cross-link (tryptophyl-tyrosyl-methioninium (Trp-Tyr) (with M-252)) is located at residues 105-226; sequence WHGAGTYRSI…LGATEMGLIY (122 aa). The active-site Proton acceptor is His-106. A cross-link (tryptophyl-tyrosyl-methioninium (Tyr-Met) (with W-105)) is located at residues 226 to 252; that stretch reads YVNPEGPDHSGEPLSAAAAIRATFGNM. His-267 provides a ligand contact to heme b.

The protein belongs to the peroxidase family. Peroxidase/catalase subfamily. As to quaternary structure, homodimer or homotetramer. The cofactor is heme b. In terms of processing, formation of the three residue Trp-Tyr-Met cross-link is important for the catalase, but not the peroxidase activity of the enzyme.

It catalyses the reaction H2O2 + AH2 = A + 2 H2O. The enzyme catalyses 2 H2O2 = O2 + 2 H2O. Bifunctional enzyme with both catalase and broad-spectrum peroxidase activity. The sequence is that of Catalase-peroxidase from Escherichia coli O1:K1 / APEC.